The primary structure comprises 77 residues: Large ribosomal subunit protein eL20 (77 aa).

Belongs to the eukaryotic ribosomal protein eL20 family. As to quaternary structure, part of the 50S ribosomal subunit. Binds 23S rRNA.

The protein is Large ribosomal subunit protein eL20 of Thermococcus onnurineus (strain NA1).